The primary structure comprises 618 residues: Medium-chain acyl-CoA ligase ACSF2, mitochondrial (618 aa).

The N-terminal 44 residues, 1–44 (MRATAAYVGMLRLGRMCAGSPGVLGARAALSRSWQEARLQAVRF), are a transit peptide targeting the mitochondrion. An N6-acetyllysine modification is found at Lys182. The residue at position 185 (Lys185) is an N6-acetyllysine; alternate. An N6-succinyllysine; alternate modification is found at Lys185. Residue 266 to 274 (TSGTTGSPK) coordinates ATP. Residues Lys343 and Lys401 each carry the N6-acetyllysine modification. Lys481 carries the N6-succinyllysine modification. 2 residues coordinate ATP: Asp496 and Arg511. Lys513 carries the N6-acetyllysine modification. An N6-acetyllysine; alternate mark is found at Lys547 and Lys573. An N6-succinyllysine; alternate mark is found at Lys547 and Lys573. Lys602 contacts ATP. At Lys602 the chain carries N6-succinyllysine.

The protein belongs to the ATP-dependent AMP-binding enzyme family.

It is found in the mitochondrion. It catalyses the reaction a medium-chain fatty acid + ATP + CoA = a medium-chain fatty acyl-CoA + AMP + diphosphate. The catalysed reaction is octanoate + ATP + CoA = octanoyl-CoA + AMP + diphosphate. Its function is as follows. Acyl-CoA synthases catalyze the initial reaction in fatty acid metabolism, by forming a thioester with CoA. Has some preference toward medium-chain substrates. Plays a role in adipocyte differentiation. This is Medium-chain acyl-CoA ligase ACSF2, mitochondrial from Macaca fascicularis (Crab-eating macaque).